The following is a 270-amino-acid chain: Molybdenum storage protein subunit beta (270 aa).

In terms of assembly, octamer consisting of 4 alpha and 4 beta chains.

The protein resides in the cytoplasm. Intracellular storage of molybdenum. Binds polyoxomolybdates. Can bind at least 90 molybdenum atoms per protein molecule. The polypeptide is Molybdenum storage protein subunit beta (Azotobacter vinelandii (strain DJ / ATCC BAA-1303)).